The chain runs to 191 residues: Thymidine kinase (191 aa).

Residues 15-22 (GPMYSGKT) and 88-91 (DEAQ) contribute to the ATP site. The Proton acceptor role is filled by E89. Zn(2+)-binding residues include C145, C148, C183, and C186.

This sequence belongs to the thymidine kinase family. Homotetramer.

It is found in the cytoplasm. It carries out the reaction thymidine + ATP = dTMP + ADP + H(+). This chain is Thymidine kinase, found in Clostridium botulinum (strain Hall / ATCC 3502 / NCTC 13319 / Type A).